The chain runs to 302 residues: NAD kinase 2 (302 aa).

The Proton acceptor role is filled by D78. Residues 78–79 (DG), 152–153 (NE), D182, 193–198 (TAYALS), and A217 each bind NAD(+).

This sequence belongs to the NAD kinase family. A divalent metal cation serves as cofactor.

It localises to the cytoplasm. The enzyme catalyses NAD(+) + ATP = ADP + NADP(+) + H(+). Involved in the regulation of the intracellular balance of NAD and NADP, and is a key enzyme in the biosynthesis of NADP. Catalyzes specifically the phosphorylation on 2'-hydroxyl of the adenosine moiety of NAD to yield NADP. The chain is NAD kinase 2 from Prochlorococcus marinus (strain MIT 9313).